A 447-amino-acid polypeptide reads, in one-letter code: Protein disulfide-isomerase like 2-2 (447 aa).

A signal peptide spans 1-26 (MERKMYKSTVFPICCLLFALFDRGNA). Thioredoxin domains lie at 27–139 (LYGS…QIKA) and 161–275 (KKKS…QLES). Catalysis depends on nucleophile residues C62 and C65. The cysteines at positions 62 and 65 are disulfide-linked. A disordered region spans residues 146–170 (DGKTSGTKNGGGSSEKKKSEPSASV). A glycan (N-linked (GlcNAc...) asparagine) is linked at N173. Active-site nucleophile residues include C197 and C200. A disulfide bridge links C197 with C200. The Prevents secretion from ER signature appears at 444–447 (KDDL).

Belongs to the protein disulfide isomerase family. In terms of tissue distribution, widely expressed.

It is found in the endoplasmic reticulum lumen. It carries out the reaction Catalyzes the rearrangement of -S-S- bonds in proteins.. Functionally, acts as a protein-folding catalyst that interacts with nascent polypeptides to catalyze the formation, isomerization, and reduction or oxidation of disulfide bonds. This chain is Protein disulfide-isomerase like 2-2 (PDIL2-2), found in Arabidopsis thaliana (Mouse-ear cress).